The chain runs to 270 residues: Regulatory protein RecX (270 aa).

This sequence belongs to the RecX family.

The protein resides in the cytoplasm. Functionally, modulates RecA activity. The sequence is that of Regulatory protein RecX from Bacillus cereus (strain AH187).